A 450-amino-acid chain; its full sequence is UPF0210 protein MK1214 (450 aa).

This sequence belongs to the UPF0210 family.

In Methanopyrus kandleri (strain AV19 / DSM 6324 / JCM 9639 / NBRC 100938), this protein is UPF0210 protein MK1214.